A 275-amino-acid chain; its full sequence is 5'-nucleotidase SurE (275 aa).

4 residues coordinate a divalent metal cation: D14, D15, S46, and N104.

The protein belongs to the SurE nucleotidase family. It depends on a divalent metal cation as a cofactor.

The protein localises to the cytoplasm. The enzyme catalyses a ribonucleoside 5'-phosphate + H2O = a ribonucleoside + phosphate. In terms of biological role, nucleotidase that shows phosphatase activity on nucleoside 5'-monophosphates. This Synechocystis sp. (strain ATCC 27184 / PCC 6803 / Kazusa) protein is 5'-nucleotidase SurE.